A 133-amino-acid chain; its full sequence is ATP synthase epsilon chain (133 aa).

The interval 81–110 (AAERPEQIDTERARKAKERAEQRLASEHVD) is disordered.

Belongs to the ATPase epsilon chain family. In terms of assembly, F-type ATPases have 2 components, CF(1) - the catalytic core - and CF(0) - the membrane proton channel. CF(1) has five subunits: alpha(3), beta(3), gamma(1), delta(1), epsilon(1). CF(0) has three main subunits: a, b and c.

The protein resides in the cell membrane. Produces ATP from ADP in the presence of a proton gradient across the membrane. The protein is ATP synthase epsilon chain of Shouchella clausii (strain KSM-K16) (Alkalihalobacillus clausii).